A 504-amino-acid chain; its full sequence is ATP synthase subunit alpha (504 aa).

ATP is bound at residue 171–178; that stretch reads GDRATGKT.

This sequence belongs to the ATPase alpha/beta chains family. F-type ATPases have 2 components, CF(1) - the catalytic core - and CF(0) - the membrane proton channel. CF(1) has five subunits: alpha(3), beta(3), gamma(1), delta(1), epsilon(1). CF(0) has three main subunits: a(1), b(2) and c(9-12). The alpha and beta chains form an alternating ring which encloses part of the gamma chain. CF(1) is attached to CF(0) by a central stalk formed by the gamma and epsilon chains, while a peripheral stalk is formed by the delta and b chains.

Its subcellular location is the cell inner membrane. It catalyses the reaction ATP + H2O + 4 H(+)(in) = ADP + phosphate + 5 H(+)(out). Functionally, produces ATP from ADP in the presence of a proton gradient across the membrane. The alpha chain is a regulatory subunit. The polypeptide is ATP synthase subunit alpha (Sulfurihydrogenibium sp. (strain YO3AOP1)).